We begin with the raw amino-acid sequence, 179 residues long: uncharacterized protein (179 aa).

Over residues 1–14 the composition is skewed to basic and acidic residues; that stretch reads MTKKVKLDQDEINN. 2 disordered regions span residues 1-90 and 121-147; these read MTKK…NNFC and HKKS…DKKV. Composition is skewed to low complexity over residues 15–90 and 126–137; these read KNKN…NNFC and RSQSQSSLNSFD. Basic and acidic residues predominate over residues 138–147; it reads QDNKSKDKKV.

This is an uncharacterized protein from Dictyostelium discoideum (Social amoeba).